Reading from the N-terminus, the 422-residue chain is Glutamate-1-semialdehyde 2,1-aminomutase (422 aa).

K258 carries the N6-(pyridoxal phosphate)lysine modification.

This sequence belongs to the class-III pyridoxal-phosphate-dependent aminotransferase family. HemL subfamily. As to quaternary structure, homodimer. Requires pyridoxal 5'-phosphate as cofactor.

The protein localises to the cytoplasm. The catalysed reaction is (S)-4-amino-5-oxopentanoate = 5-aminolevulinate. The protein operates within porphyrin-containing compound metabolism; protoporphyrin-IX biosynthesis; 5-aminolevulinate from L-glutamyl-tRNA(Glu): step 2/2. The chain is Glutamate-1-semialdehyde 2,1-aminomutase from Chlamydia muridarum (strain MoPn / Nigg).